Here is a 491-residue protein sequence, read N- to C-terminus: UDP-N-acetylmuramate--L-alanine ligase (491 aa).

ATP is bound at residue 126 to 132 (GTHGKTT).

The protein belongs to the MurCDEF family.

Its subcellular location is the cytoplasm. It carries out the reaction UDP-N-acetyl-alpha-D-muramate + L-alanine + ATP = UDP-N-acetyl-alpha-D-muramoyl-L-alanine + ADP + phosphate + H(+). It functions in the pathway cell wall biogenesis; peptidoglycan biosynthesis. In terms of biological role, cell wall formation. The protein is UDP-N-acetylmuramate--L-alanine ligase of Klebsiella pneumoniae (strain 342).